Here is a 447-residue protein sequence, read N- to C-terminus: Na(+)/H(+) antiporter NhaA 2 (447 aa).

The next 10 membrane-spanning stretches (helical) occupy residues V34 to W54, L77 to L97, A115 to V135, G146 to G166, F176 to Y196, I200 to Q220, V290 to G310, P321 to T341, W359 to I379, and F393 to L413.

It belongs to the NhaA Na(+)/H(+) (TC 2.A.33) antiporter family.

It localises to the cell membrane. The catalysed reaction is Na(+)(in) + 2 H(+)(out) = Na(+)(out) + 2 H(+)(in). Its function is as follows. Na(+)/H(+) antiporter that extrudes sodium in exchange for external protons. The protein is Na(+)/H(+) antiporter NhaA 2 of Mycolicibacterium gilvum (strain PYR-GCK) (Mycobacterium gilvum (strain PYR-GCK)).